We begin with the raw amino-acid sequence, 211 residues long: Mitotic spindle assembly checkpoint protein MAD2B (211 aa).

The region spanning 13 to 203 (QVVADVLSEF…SDILKMQLYV (191 aa)) is the HORMA domain. Positions 21–155 (EFLEVAVHLI…FTVLVHTREA (135 aa)) are mediates interaction with REV1 and REV3L and homodimerization.

In terms of assembly, homooligomer. Heterodimer with REV3L. This dimer forms the minimal DNA polymerase zeta complex (Pol-zeta2), with REV3L bearing DNA polymerase catalytic activity, although its activity is very low in this context. Component of the tetrameric Pol-zeta complex (Pol-zeta4), which consists of REV3L, MAD2L2, POLD2 and POLD3; Pol-zeta4 is the fully active form of DNA polymerase zeta. Component of the shieldin complex, consisting of SHLD1, SHLD2, SHLD3 and MAD2L2/REV7. Within the complex, SHLD2 forms a scaffold which interacts with a SHLD3-MAD2L2 subcomplex via its N-terminus, and with SHLD1 via its C-terminus. Interacts with REV1. Interacts with ADAM9. Interacts with CHAMP1. Interacts with FZR1 (in complex with the anaphase promoting complex APC). May interact with CDC20. Interacts with RAN. Interacts with ELK1; the interaction is direct and recruits MAD2L2 to ELK1-specific promoters. May interact with the JNK kinases MAPK8 and/or MAPK9 to stimulate ELK1 phosphorylation and transcriptional activity upon DNA damage. Interacts with TCF7L2; prevents its binding to promoters and negatively modulates its transcriptional activity. Interacts with YY1AP1. Interacts with PRCC; the interaction is direct. Interacts with POGZ. Interacts with ASTE1.

The protein resides in the nucleus. Its subcellular location is the cytoplasm. It is found in the cytoskeleton. The protein localises to the spindle. Its function is as follows. Adapter protein able to interact with different proteins and involved in different biological processes. Mediates the interaction between the error-prone DNA polymerase zeta catalytic subunit REV3L and the inserter polymerase REV1, thereby mediating the second polymerase switching in translesion DNA synthesis. Translesion DNA synthesis releases the replication blockade of replicative polymerases, stalled in presence of DNA lesions. Component of the shieldin complex, which plays an important role in repair of DNA double-stranded breaks (DSBs). During G1 and S phase of the cell cycle, the complex functions downstream of TP53BP1 to promote non-homologous end joining (NHEJ) and suppress DNA end resection. Mediates various NHEJ-dependent processes including immunoglobulin class-switch recombination, and fusion of unprotected telomeres. May also regulate another aspect of cellular response to DNA damage through regulation of the JNK-mediated phosphorylation and activation of the transcriptional activator ELK1. Inhibits the FZR1- and probably CDC20-mediated activation of the anaphase promoting complex APC thereby regulating progression through the cell cycle. Regulates TCF7L2-mediated gene transcription and may play a role in epithelial-mesenchymal transdifferentiation. The sequence is that of Mitotic spindle assembly checkpoint protein MAD2B (Mad2l2) from Rattus norvegicus (Rat).